Reading from the N-terminus, the 205-residue chain is Large ribosomal subunit protein uL3 (205 aa).

The protein belongs to the universal ribosomal protein uL3 family. Part of the 50S ribosomal subunit. Forms a cluster with proteins L14 and L19.

One of the primary rRNA binding proteins, it binds directly near the 3'-end of the 23S rRNA, where it nucleates assembly of the 50S subunit. This Bacteroides thetaiotaomicron (strain ATCC 29148 / DSM 2079 / JCM 5827 / CCUG 10774 / NCTC 10582 / VPI-5482 / E50) protein is Large ribosomal subunit protein uL3.